Here is a 299-residue protein sequence, read N- to C-terminus: Sodium/potassium-transporting ATPase subunit beta-2 (299 aa).

The Cytoplasmic segment spans residues 1–36 (MAALTQKKTCSQMMEEWKEFMWNPRTREFMGRTGSS). A helical; Signal-anchor for type II membrane protein membrane pass occupies residues 37–57 (WALILLFYVVFYAFLTAVFSL). The Extracellular portion of the chain corresponds to 58–299 (SLWVMLQTID…VIFTMKIDRL (242 aa)). N-linked (GlcNAc...) asparagine glycosylation is found at Asn-101 and Asn-119. 2 disulfide bridges follow: Cys-130/Cys-152 and Cys-162/Cys-178. Residues Asn-199, Asn-226, Asn-247, and Asn-259 are each glycosylated (N-linked (GlcNAc...) asparagine). Cys-206 and Cys-270 are disulfide-bonded.

The protein belongs to the X(+)/potassium ATPases subunit beta family. In terms of assembly, the sodium/potassium-transporting ATPase is composed of a catalytic alpha subunit, an auxiliary non-catalytic beta subunit and an additional regulatory subunit. As to expression, expressed at a high level in bladder epithelial cells and eye and at a trace level in kidney; it is not detectable in significant amounts in the stomach, colon and small intestine.

The protein localises to the cell membrane. Functionally, this is the non-catalytic component of the active enzyme, which catalyzes the hydrolysis of ATP coupled with the exchange of Na(+) and K(+) ions across the plasma membrane. The exact function of this glycoprotein is not known. Some specific sequence of the beta subunit can modulate the activation of the Na,K-pump by extracellular potassium ions. In Rhinella marina (Cane toad), this protein is Sodium/potassium-transporting ATPase subunit beta-2.